We begin with the raw amino-acid sequence, 108 residues long: MAARKTYILKLYVAGNTPNSMRALNTLKEILENEFKGVYALKVIDVLKQPQLAEEDKILATPTLAKILPPPVRRIIGDLSDREKVLIGLDLLFDELSESELNGGKKNK.

This sequence belongs to the KaiB family. In terms of assembly, may undergo a major conformational rearrangment; in the free state forms homooligomers. When bound to KaiC switches to a monomeric thioredoxin-fold (KaiB(fs)). The active oscillator complex is probably KaiC(6):KaiB(6).

Functionally, component of the KaiBC clock protein complex, which constitutes the main circadian regulator in cyanobacteria; it may modify the ATPase activity of KaiC. May be a metamorphic protein which reversibly switches between an inactive tetrameric fold and a rare, thioredoxin-like monomeric fold (KaiB(fs)). KaiB(fs) binds phospho-KaiC, and perhaps clock output effectors. The protein is Circadian clock oscillator protein KaiB of Prochlorococcus marinus (strain MIT 9515).